A 131-amino-acid polypeptide reads, in one-letter code: Ribosome-binding factor A (131 aa).

This sequence belongs to the RbfA family. As to quaternary structure, monomer. Binds 30S ribosomal subunits, but not 50S ribosomal subunits or 70S ribosomes.

The protein resides in the cytoplasm. Functionally, one of several proteins that assist in the late maturation steps of the functional core of the 30S ribosomal subunit. Associates with free 30S ribosomal subunits (but not with 30S subunits that are part of 70S ribosomes or polysomes). Required for efficient processing of 16S rRNA. May interact with the 5'-terminal helix region of 16S rRNA. The polypeptide is Ribosome-binding factor A (Mannheimia succiniciproducens (strain KCTC 0769BP / MBEL55E)).